Consider the following 1898-residue polypeptide: Receptor-type tyrosine-protein phosphatase F (1898 aa).

A signal peptide spans 1–29 (MAPEPAPGRRMVPLVPALVMLGLMAGAHG). Residues 30–1254 (DSKPVFVKVP…QQQEEPEMLW (1225 aa)) lie on the Extracellular side of the membrane. Ig-like C2-type domains follow at residues 33-123 (PVFV…AKLS), 135-224 (PTID…ANLY), and 232-314 (PRFS…AQVT). An intrachain disulfide couples C54 to C107. 68–77 (KKGKKVSSQR) provides a ligand contact to heparin. The N-linked (GlcNAc...) asparagine glycan is linked to N117. C156 and C207 are joined by a disulfide. N250 and N295 each carry an N-linked (GlcNAc...) asparagine glycan. Residues C253 and C298 are joined by a disulfide bond. Fibronectin type-III domains lie at 321–411 (PPID…TGEQ), 416–510 (PPRR…TQQG), 514–604 (QPAD…TAQS), 609–706 (PPQK…TDED), 711–810 (PPRK…TTGA), 811–905 (VPGR…PEDA), 909–1001 (FPQN…TMPM), and 1005–1089 (FAKN…TAPD). A disordered region spans residues 693-713 (GPESSPVLVRTDEDVPSGPPR). N721 carries an N-linked (GlcNAc...) asparagine glycan. 2 N-linked (GlcNAc...) asparagine glycosylation sites follow: N941 and N957. The chain crosses the membrane as a helical span at residues 1255 to 1275 (VTGPVLAVILIILIVIAILLF). Residues 1276-1898 (KRKRTHSPSS…YLGSFDHYAT (623 aa)) are Cytoplasmic-facing. The residue at position 1296 (S1296) is a Phosphoserine. Tyrosine-protein phosphatase domains lie at 1343–1598 (FSQE…LLEA) and 1630–1889 (MELE…ALEY). Residues D1507, 1539 to 1545 (CSAGVGR), and Q1583 each bind substrate. The Phosphocysteine intermediate role is filled by C1539. Catalysis depends on C1830, which acts as the Phosphocysteine intermediate.

Belongs to the protein-tyrosine phosphatase family. Receptor class 2A subfamily. Interacts with GRIP1. Interacts with PPFIA1, PPFIA2 and PPFIA3. Interacts with PTPRF.

It is found in the membrane. The catalysed reaction is O-phospho-L-tyrosyl-[protein] + H2O = L-tyrosyl-[protein] + phosphate. Possible cell adhesion receptor. It possesses an intrinsic protein tyrosine phosphatase activity (PTPase) and dephosphorylates EPHA2 regulating its activity. Functionally, the first PTPase domain has enzymatic activity, while the second one seems to affect the substrate specificity of the first one. The sequence is that of Receptor-type tyrosine-protein phosphatase F (Ptprf) from Rattus norvegicus (Rat).